A 218-amino-acid polypeptide reads, in one-letter code: Small ribosomal subunit protein uS3c (218 aa).

The 72-residue stretch at 47–118 (VQKNIRISSG…KLNIAITRIS (72 aa)) folds into the KH type-2 domain.

The protein belongs to the universal ribosomal protein uS3 family. In terms of assembly, part of the 30S ribosomal subunit.

It localises to the plastid. The protein resides in the chloroplast. This chain is Small ribosomal subunit protein uS3c (rps3), found in Lepidium virginicum (Virginia pepperweed).